The primary structure comprises 141 residues: MSIIISKTVKQELPEEKIRKAIELVLQGEKCEAEEISAVYCGDRLIRKINIEHLAHDYPTDTISFRLNSGNAIEGEFYISCDTVRRNAQEYESSFENELLRVTIHSVLHLIGFEDQSAAQKAEMTQKENRYLAALFHHDEK.

Zn(2+)-binding residues include His-105, His-109, and Asp-115.

This sequence belongs to the endoribonuclease YbeY family. Zn(2+) is required as a cofactor.

It is found in the cytoplasm. Single strand-specific metallo-endoribonuclease involved in late-stage 70S ribosome quality control and in maturation of the 3' terminus of the 16S rRNA. In Chloroherpeton thalassium (strain ATCC 35110 / GB-78), this protein is Endoribonuclease YbeY.